Here is a 187-residue protein sequence, read N- to C-terminus: Ion-translocating oxidoreductase complex subunit B (187 aa).

The hydrophobic stretch occupies residues 1-23; that stretch reads MIAAAASMSALGLGLGYLLGAAA. One can recognise a 4Fe-4S domain in the interval 29-88; the sequence is ETPPIVEEIAKILPGTNCGACGFPGCNGLAEAMAEGNAPVTACTPGGRDVALALAEIVTV. 12 residues coordinate [4Fe-4S] cluster: Cys46, Cys49, Cys54, Cys71, Cys112, Cys115, Cys118, Cys122, Cys142, Cys145, Cys148, and Cys152. 2 consecutive 4Fe-4S ferredoxin-type domains span residues 103-132 and 133-162; these read MVAF…GGAK and QIHT…SRVK.

The protein belongs to the 4Fe4S bacterial-type ferredoxin family. RnfB subfamily. As to quaternary structure, the complex is composed of six subunits: RnfA, RnfB, RnfC, RnfD, RnfE and RnfG. [4Fe-4S] cluster serves as cofactor.

The protein localises to the cellular chromatophore membrane. Its function is as follows. Part of a membrane-bound complex that couples electron transfer with translocation of ions across the membrane. Required for nitrogen fixation. Involved in electron transfer to nitrogenase. This is Ion-translocating oxidoreductase complex subunit B from Rhodobacter capsulatus (Rhodopseudomonas capsulata).